Consider the following 239-residue polypeptide: Protein-S-isoprenylcysteine O-methyltransferase (239 aa).

The Cytoplasmic portion of the chain corresponds to methionine 1–valine 23. A helical transmembrane segment spans residues threonine 24–isoleucine 44. The Lumenal portion of the chain corresponds to arginine 45–lysine 47. A helical membrane pass occupies residues asparagine 48–alanine 68. Over lysine 69–tyrosine 88 the chain is Cytoplasmic. Residues methionine 89 to leucine 109 form a helical membrane-spanning segment. Residue lysine 110 is a topological domain, lumenal. Residues isoleucine 111–leucine 131 form a helical membrane-spanning segment. At glycine 132–tyrosine 175 the chain is on the cytoplasmic side. S-adenosyl-L-methionine-binding positions include histidine 159–valine 162, tyrosine 167, and histidine 172–tyrosine 175. An intramembrane region (helical) is located at residues leucine 176 to phenylalanine 206. Residues serine 207–isoleucine 239 lie on the Cytoplasmic side of the membrane. Substrate is bound at residue arginine 209. Residue glutamate 213 participates in S-adenosyl-L-methionine binding.

The protein belongs to the class VI-like SAM-binding methyltransferase superfamily. Isoprenylcysteine carboxyl methyltransferase family.

It is found in the endoplasmic reticulum membrane. It carries out the reaction [protein]-C-terminal S-[(2E,6E)-farnesyl]-L-cysteine + S-adenosyl-L-methionine = [protein]-C-terminal S-[(2E,6E)-farnesyl]-L-cysteine methyl ester + S-adenosyl-L-homocysteine. Functionally, mediates C-terminal methylation of the isoprenylated C-terminal cysteine in A-factor mating pheromone and Ras proteins. Does not have a preference for the farnesyl or geranylgeranyl moieties in the model substrates N-acetyl-S-farnesyl-L-cysteine (AFC) and N-acetyl-S-geranylgeranyl-L-cysteine (AGGC) in vitro. This Saccharomyces cerevisiae (strain ATCC 204508 / S288c) (Baker's yeast) protein is Protein-S-isoprenylcysteine O-methyltransferase (STE14).